The following is a 345-amino-acid chain: S-adenosylmethionine:tRNA ribosyltransferase-isomerase (345 aa).

This sequence belongs to the QueA family. In terms of assembly, monomer.

The protein resides in the cytoplasm. The enzyme catalyses 7-aminomethyl-7-carbaguanosine(34) in tRNA + S-adenosyl-L-methionine = epoxyqueuosine(34) in tRNA + adenine + L-methionine + 2 H(+). It participates in tRNA modification; tRNA-queuosine biosynthesis. Transfers and isomerizes the ribose moiety from AdoMet to the 7-aminomethyl group of 7-deazaguanine (preQ1-tRNA) to give epoxyqueuosine (oQ-tRNA). The sequence is that of S-adenosylmethionine:tRNA ribosyltransferase-isomerase from Shewanella sp. (strain MR-7).